The sequence spans 220 residues: METPTPRVKPGFNGVGVGMGSSVNGSSRRAGYYMGPAGAVAVAGGGRAAAAAPVDGCSVALRVFVLAATLVSAVVMGVDRQTSTIRITVTDALPPLEVPLTANWSYSSAFVYFVVANAMVCLFSAAALAACRSRAAMVPVMVGDLLALALLYSAVGAAAEFGILGERGNSHVRWPKVCNVYGRFCERAMAAVIVSLIAAFANLVLLMLNILTIHKSSSYY.

The Cytoplasmic portion of the chain corresponds to 1 to 57; the sequence is METPTPRVKPGFNGVGVGMGSSVNGSSRRAGYYMGPAGAVAVAGGGRAAAAAPVDGC. Residues 58-78 form a helical membrane-spanning segment; it reads SVALRVFVLAATLVSAVVMGV. Residues 79-108 lie on the Extracellular side of the membrane; sequence DRQTSTIRITVTDALPPLEVPLTANWSYSS. An N-linked (GlcNAc...) asparagine glycan is attached at Asn103. The chain crosses the membrane as a helical span at residues 109 to 129; the sequence is AFVYFVVANAMVCLFSAAALA. Topologically, residues 130 to 144 are cytoplasmic; sequence ACRSRAAMVPVMVGD. The helical transmembrane segment at 145-165 threads the bilayer; sequence LLALALLYSAVGAAAEFGILG. The Extracellular segment spans residues 166-187; sequence ERGNSHVRWPKVCNVYGRFCER. Residues 188–208 traverse the membrane as a helical segment; sequence AMAAVIVSLIAAFANLVLLML. Over 209 to 220 the chain is Cytoplasmic; it reads NILTIHKSSSYY.

It belongs to the Casparian strip membrane proteins (CASP) family. Homodimer and heterodimers.

It localises to the cell membrane. This chain is CASP-like protein 1E1, found in Zea mays (Maize).